The following is a 347-amino-acid chain: E3 ubiquitin-protein ligase ARK2C (347 aa).

2 disordered regions span residues P23–H79 and P268–S289. The segment at F267–H269 is ubiquitin binding. Positions P276–E285 are enriched in basic and acidic residues. C295 and C298 together coordinate Zn(2+). The segment at C295 to R336 adopts an RING-type; atypical zinc-finger fold. A ubiquitin binding region spans residues R310–M314. Positions 318 and 321 each coordinate Zn(2+).

This sequence belongs to the Arkadia family. Monomer; binding to the ubiquitin-conjugating enzyme E2 does not trigger homodimerization. Expressed in neurons of the nervous system.

The protein resides in the nucleus. The catalysed reaction is S-ubiquitinyl-[E2 ubiquitin-conjugating enzyme]-L-cysteine + [acceptor protein]-L-lysine = [E2 ubiquitin-conjugating enzyme]-L-cysteine + N(6)-ubiquitinyl-[acceptor protein]-L-lysine.. With respect to regulation, binds free ubiquitin non-covalently via its RING-type zinc finger. Ubiquitin-binding leads to enhance the E3 ubiquitin-protein ligase activity by stabilizing the ubiquitin-conjugating enzyme E2 (donor ubiquitin) in the 'closed' conformation and activating ubiquitin transfer. Functionally, E3 ubiquitin-protein ligase that acts as a regulator of motor axon elongation. Required for efficient motor axon extension in the dorsal forelimb by enhancing the transcriptional responses of the SMAD1/SMAD5/SMAD8 effectors, which are activated downstream of BMP. Acts by mediating ubiquitination and degradation of SMAD inhibitors such as SMAD6, SMAD7, SKI and SNON isoform of SKIL. The sequence is that of E3 ubiquitin-protein ligase ARK2C from Mus musculus (Mouse).